A 253-amino-acid polypeptide reads, in one-letter code: tRNA pseudouridine synthase A (253 aa).

Aspartate 53 serves as the catalytic Nucleophile. Residue tyrosine 111 coordinates substrate.

The protein belongs to the tRNA pseudouridine synthase TruA family. As to quaternary structure, homodimer.

It catalyses the reaction uridine(38/39/40) in tRNA = pseudouridine(38/39/40) in tRNA. Functionally, formation of pseudouridine at positions 38, 39 and 40 in the anticodon stem and loop of transfer RNAs. The polypeptide is tRNA pseudouridine synthase A (Oceanobacillus iheyensis (strain DSM 14371 / CIP 107618 / JCM 11309 / KCTC 3954 / HTE831)).